Reading from the N-terminus, the 3587-residue chain is Tyrocidine synthase 2 (3587 aa).

Residues 466 to 1045 are domain 1 (Proline-activating); sequence AATMHELFSR…IQALAAYVEG (580 aa). Carrier domains follow at residues 972–1047 and 2007–2082; these read APTT…EGGE and APAT…EHSE. An O-(pantetheine 4'-phosphoryl)serine mark is found at Ser-1007 and Ser-2042. The segment at 1522–2081 is domain 2 (Phenylalanine-activating); sequence EQTAVVFGDK…RDLARLIEHS (560 aa). Positions 2540-3122 are domain 3 (D-phenylalanine-activating); sequence YRADQTIQQL…NSRESEQGVV (583 aa). Residues 3017–3040 are disordered; sequence NDKIDRKALPKPNQEENRTEQYAA. The segment covering 3018–3035 has biased composition (basic and acidic residues); it reads DKIDRKALPKPNQEENRT. The Carrier 3 domain maps to 3040–3114; that stretch reads APQTELEQLL…EAALRVIPNS (75 aa). Residue Ser-3075 is modified to O-(pantetheine 4'-phosphoryl)serine.

The protein belongs to the ATP-dependent AMP-binding enzyme family. As to quaternary structure, large multienzyme complex of TycA, TycB and TycC. It depends on pantetheine 4'-phosphate as a cofactor.

It carries out the reaction L-phenylalanine + ATP + H2O = D-phenylalanine + AMP + diphosphate + H(+). The protein operates within antibiotic biosynthesis; tyrocidine biosynthesis. Functionally, activates the second to fourth amino acids in tyrocidine (in tyrocidine A, Pro, Phe, and D-Phe) and epimerizes the last one. In Brevibacillus parabrevis, this protein is Tyrocidine synthase 2 (tycB).